The primary structure comprises 488 residues: ATP synthase subunit beta (488 aa).

164 to 171 is a binding site for ATP; it reads GGAGVGKT.

This sequence belongs to the ATPase alpha/beta chains family. In terms of assembly, F-type ATPases have 2 components, CF(1) - the catalytic core - and CF(0) - the membrane proton channel. CF(1) has five subunits: alpha(3), beta(3), gamma(1), delta(1), epsilon(1). CF(0) has four main subunits: a(1), b(1), b'(1) and c(9-12).

The protein localises to the cellular thylakoid membrane. It catalyses the reaction ATP + H2O + 4 H(+)(in) = ADP + phosphate + 5 H(+)(out). In terms of biological role, produces ATP from ADP in the presence of a proton gradient across the membrane. The catalytic sites are hosted primarily by the beta subunits. The sequence is that of ATP synthase subunit beta from Prochlorococcus marinus (strain NATL1A).